The sequence spans 408 residues: Menaquinone reductase (408 aa).

FAD contacts are provided by residues 13 to 17 (GAGPA), 46 to 49 (CGDG), R103, A127, D290, and 302 to 303 (GI).

Belongs to the geranylgeranyl reductase family. Requires FAD as cofactor.

It catalyses the reaction menaquinone-9 + AH2 = beta-dihydromenaquinone-9 + A. The protein operates within quinol/quinone metabolism; menaquinone biosynthesis. Catalyzes the reduction of a single double bond in the isoprenoid tail of menaquinone (MK-9) in M.tuberculosis, likely the beta-isoprene unit, forming the predominant form of menaquinone found in mycobacteria, MK-9(II-H2). This chain is Menaquinone reductase, found in Mycobacterium tuberculosis (strain CDC 1551 / Oshkosh).